A 607-amino-acid chain; its full sequence is Elongation factor 4 (607 aa).

The region spanning 11–193 is the tr-type G domain; the sequence is SKIRNFSIIA…QIVEKVPAPT (183 aa). Residues 23–28 and 140–143 each bind GTP; these read DHGKST and NKID.

Belongs to the TRAFAC class translation factor GTPase superfamily. Classic translation factor GTPase family. LepA subfamily.

Its subcellular location is the cell membrane. It catalyses the reaction GTP + H2O = GDP + phosphate + H(+). Functionally, required for accurate and efficient protein synthesis under certain stress conditions. May act as a fidelity factor of the translation reaction, by catalyzing a one-codon backward translocation of tRNAs on improperly translocated ribosomes. Back-translocation proceeds from a post-translocation (POST) complex to a pre-translocation (PRE) complex, thus giving elongation factor G a second chance to translocate the tRNAs correctly. Binds to ribosomes in a GTP-dependent manner. In Bacillus anthracis (strain CDC 684 / NRRL 3495), this protein is Elongation factor 4.